The primary structure comprises 85 residues: Cytochrome c oxidase assembly factor 3, mitochondrial (85 aa).

At 1–26 the chain is on the mitochondrial matrix side; that stretch reads MVLNPSKYQDTRTWKMTPAMIRARKP. A helical transmembrane segment spans residues 27-49; sequence FFKGNMLGLTLLLGVTGSVYYYT. Residues 50–85 lie on the Mitochondrial intermembrane side of the membrane; sequence YHFLHKDNDFADVPIPPIDPQELEALKKEYEAKKKA.

This sequence belongs to the COA3 family. Component of 250-400 kDa complexes called cytochrome oxidase assembly intermediates or COA complexes composed at least COA3, COX14, COX5A, SHY1 and SSC1. Interacts with COX1 and MSS51.

The protein localises to the mitochondrion inner membrane. Functionally, required for assembly of cytochrome c oxidase (complex IV). With COX14, negatively regulates COX1 translation and is involved in MSS51 association with newly synthesized COX1. The polypeptide is Cytochrome c oxidase assembly factor 3, mitochondrial (COA3) (Saccharomyces cerevisiae (strain RM11-1a) (Baker's yeast)).